The sequence spans 252 residues: Hydroxyacylglutathione hydrolase (252 aa).

Positions 54, 56, 58, 59, 113, 132, and 170 each coordinate Zn(2+).

Belongs to the metallo-beta-lactamase superfamily. Glyoxalase II family. Monomer. Zn(2+) serves as cofactor.

The enzyme catalyses an S-(2-hydroxyacyl)glutathione + H2O = a 2-hydroxy carboxylate + glutathione + H(+). It functions in the pathway secondary metabolite metabolism; methylglyoxal degradation; (R)-lactate from methylglyoxal: step 2/2. Thiolesterase that catalyzes the hydrolysis of S-D-lactoyl-glutathione to form glutathione and D-lactic acid. In Gloeobacter violaceus (strain ATCC 29082 / PCC 7421), this protein is Hydroxyacylglutathione hydrolase.